A 195-amino-acid polypeptide reads, in one-letter code: MSLETVVEDIRDEARERAKEIRADADERADEIVAEAEADADDIIADAEAEVTAEIDQEREQQLSSAELEAKQMRLEARRDALQSVRSAVEDRIVALDGDEREELTRELLDAASTEFDGADTVRVFGRADDEALISEILDDYDGYEYAGEYDCLGGVVVESDASRIRVNNTFDSILADAWENNLKAISARLFDEEQ.

This sequence belongs to the V-ATPase E subunit family. Has multiple subunits with at least A(3), B(3), C, D, E, F, H, I and proteolipid K(x).

It localises to the cell membrane. In terms of biological role, component of the A-type ATP synthase that produces ATP from ADP in the presence of a proton gradient across the membrane. The protein is A-type ATP synthase subunit E of Halobacterium salinarum (strain ATCC 29341 / DSM 671 / R1).